A 189-amino-acid polypeptide reads, in one-letter code: ATP-dependent protease subunit HslV (189 aa).

Thr-12 is a catalytic residue. The Na(+) site is built by Ala-172, Cys-175, and Thr-178.

This sequence belongs to the peptidase T1B family. HslV subfamily. As to quaternary structure, a double ring-shaped homohexamer of HslV is capped on each side by a ring-shaped HslU homohexamer. The assembly of the HslU/HslV complex is dependent on binding of ATP.

It localises to the cytoplasm. It catalyses the reaction ATP-dependent cleavage of peptide bonds with broad specificity.. Allosterically activated by HslU binding. Its function is as follows. Protease subunit of a proteasome-like degradation complex believed to be a general protein degrading machinery. The polypeptide is ATP-dependent protease subunit HslV (Ehrlichia ruminantium (strain Welgevonden)).